Consider the following 349-residue polypeptide: Protein-glutamate methylesterase/protein-glutamine glutaminase (349 aa).

The region spanning 5–122 is the Response regulatory domain; the sequence is RVLSVDDSAL…REGMLAYSEM (118 aa). D56 carries the post-translational modification 4-aspartylphosphate. One can recognise a CheB-type methylesterase domain in the interval 152 to 344; the sequence is LLSSEKLIAI…QQMLAKISAG (193 aa). Residues S164, H190, and D286 contribute to the active site.

It belongs to the CheB family. Phosphorylated by CheA. Phosphorylation of the N-terminal regulatory domain activates the methylesterase activity.

The protein localises to the cytoplasm. The enzyme catalyses [protein]-L-glutamate 5-O-methyl ester + H2O = L-glutamyl-[protein] + methanol + H(+). The catalysed reaction is L-glutaminyl-[protein] + H2O = L-glutamyl-[protein] + NH4(+). In terms of biological role, involved in chemotaxis. Part of a chemotaxis signal transduction system that modulates chemotaxis in response to various stimuli. Catalyzes the demethylation of specific methylglutamate residues introduced into the chemoreceptors (methyl-accepting chemotaxis proteins or MCP) by CheR. Also mediates the irreversible deamidation of specific glutamine residues to glutamic acid. The sequence is that of Protein-glutamate methylesterase/protein-glutamine glutaminase from Escherichia coli O157:H7.